A 91-amino-acid polypeptide reads, in one-letter code: Elongation factor 1-beta (91 aa).

This sequence belongs to the EF-1-beta/EF-1-delta family.

Its function is as follows. Promotes the exchange of GDP for GTP in EF-1-alpha/GDP, thus allowing the regeneration of EF-1-alpha/GTP that could then be used to form the ternary complex EF-1-alpha/GTP/AAtRNA. The protein is Elongation factor 1-beta of Thermofilum pendens (strain DSM 2475 / Hrk 5).